An 81-amino-acid polypeptide reads, in one-letter code: Short neurotoxin 2 (81 aa).

Residues 1–21 (MKTLLLTLVVVTIVCLDLGYT) form the signal peptide. Disulfide bonds link Cys24/Cys43, Cys38/Cys60, Cys62/Cys73, and Cys74/Cys79.

The protein belongs to the three-finger toxin family. Short-chain subfamily. Type I alpha-neurotoxin sub-subfamily. In terms of tissue distribution, expressed by the venom gland.

The protein resides in the secreted. Functionally, binds to muscle nicotinic acetylcholine receptor (nAChR) and inhibit acetylcholine from binding to the receptor, thereby impairing neuromuscular transmission. This is Short neurotoxin 2 from Cryptophis nigrescens (Eastern small-eyed snake).